Reading from the N-terminus, the 264-residue chain is Acyl-[acyl-carrier-protein]--UDP-N-acetylglucosamine O-acyltransferase (264 aa).

The protein belongs to the transferase hexapeptide repeat family. LpxA subfamily. As to quaternary structure, homotrimer.

Its subcellular location is the cytoplasm. The enzyme catalyses a (3R)-hydroxyacyl-[ACP] + UDP-N-acetyl-alpha-D-glucosamine = a UDP-3-O-[(3R)-3-hydroxyacyl]-N-acetyl-alpha-D-glucosamine + holo-[ACP]. The protein operates within glycolipid biosynthesis; lipid IV(A) biosynthesis; lipid IV(A) from (3R)-3-hydroxytetradecanoyl-[acyl-carrier-protein] and UDP-N-acetyl-alpha-D-glucosamine: step 1/6. Its function is as follows. Involved in the biosynthesis of lipid A, a phosphorylated glycolipid that anchors the lipopolysaccharide to the outer membrane of the cell. The sequence is that of Acyl-[acyl-carrier-protein]--UDP-N-acetylglucosamine O-acyltransferase from Glaesserella parasuis serovar 5 (strain SH0165) (Haemophilus parasuis).